A 382-amino-acid polypeptide reads, in one-letter code: Lactosylceramide 1,3-N-acetyl-beta-D-glucosaminyltransferase B (382 aa).

Topologically, residues 1–13 (MAVLKMPRFKKYH) are cytoplasmic. A helical; Signal-anchor for type II membrane protein membrane pass occupies residues 14 to 30 (LRLMITCFSTLLLMTYW). Residues 31-382 (EKIDNCVVTH…CKAAFFEEDT (352 aa)) lie on the Lumenal side of the membrane. N-linked (GlcNAc...) asparagine glycans are attached at residues asparagine 57, asparagine 112, asparagine 167, and asparagine 276.

It belongs to the glycosyltransferase 31 family.

It localises to the golgi apparatus membrane. It catalyses the reaction a beta-D-Gal-(1-&gt;4)-beta-D-Glc-(1&lt;-&gt;1)-Cer(d18:1(4E)) + UDP-N-acetyl-alpha-D-glucosamine = a beta-D-GlcNAc-(1-&gt;3)-beta-D-Gal-(1-&gt;4)-beta-D-Glc-(1&lt;-&gt;1)-Cer(d18:1(4E)) + UDP + H(+). The catalysed reaction is a neolactoside nLc4Cer(d18:1(4E)) + UDP-N-acetyl-alpha-D-glucosamine = a neolactoside IV(3)-beta-GlcNAc-nLc4Cer(d18:1(4E)) + UDP + H(+). Its pathway is protein modification; protein glycosylation. Functionally, beta-1,3-N-acetylglucosaminyltransferase that plays a key role in the synthesis of lacto- or neolacto-series carbohydrate chains on glycolipids. The polypeptide is Lactosylceramide 1,3-N-acetyl-beta-D-glucosaminyltransferase B (b3gnt5b) (Danio rerio (Zebrafish)).